A 198-amino-acid polypeptide reads, in one-letter code: Pyridoxal 5'-phosphate synthase subunit PdxT (198 aa).

An L-glutamine-binding site is contributed by 50 to 52 (GES). Cysteine 82 (nucleophile) is an active-site residue. L-glutamine-binding positions include arginine 111 and 140-141 (IR). Active-site charge relay system residues include histidine 177 and glutamate 179.

The protein belongs to the glutaminase PdxT/SNO family. As to quaternary structure, in the presence of PdxS, forms a dodecamer of heterodimers. Only shows activity in the heterodimer.

It carries out the reaction aldehydo-D-ribose 5-phosphate + D-glyceraldehyde 3-phosphate + L-glutamine = pyridoxal 5'-phosphate + L-glutamate + phosphate + 3 H2O + H(+). It catalyses the reaction L-glutamine + H2O = L-glutamate + NH4(+). The protein operates within cofactor biosynthesis; pyridoxal 5'-phosphate biosynthesis. Functionally, catalyzes the hydrolysis of glutamine to glutamate and ammonia as part of the biosynthesis of pyridoxal 5'-phosphate. The resulting ammonia molecule is channeled to the active site of PdxS. The chain is Pyridoxal 5'-phosphate synthase subunit PdxT from Leifsonia xyli subsp. xyli (strain CTCB07).